A 246-amino-acid chain; its full sequence is DNA repair protein RecO (246 aa).

This sequence belongs to the RecO family.

Functionally, involved in DNA repair and RecF pathway recombination. In Alkaliphilus metalliredigens (strain QYMF), this protein is DNA repair protein RecO.